We begin with the raw amino-acid sequence, 211 residues long: Ion-translocating oxidoreductase complex subunit G (211 aa).

The chain crosses the membrane as a helical span at residues 9-29 (GLTLAIFACATTGLVALTQYL). Threonine 175 carries the FMN phosphoryl threonine modification.

Belongs to the RnfG family. As to quaternary structure, the complex is composed of six subunits: RnfA, RnfB, RnfC, RnfD, RnfE and RnfG. FMN serves as cofactor.

The protein localises to the cell inner membrane. Part of a membrane-bound complex that couples electron transfer with translocation of ions across the membrane. The chain is Ion-translocating oxidoreductase complex subunit G from Vibrio parahaemolyticus serotype O3:K6 (strain RIMD 2210633).